We begin with the raw amino-acid sequence, 492 residues long: Solute carrier family 2, facilitated glucose transporter member 1 (492 aa).

Met1 is modified (N-acetylmethionine). Residues 1 to 11 (MEPSSKKLTGR) lie on the Cytoplasmic side of the membrane. The chain crosses the membrane as a helical span at residues 12–33 (LMLAVGGAVLGSLQFGYNTGVI). Topologically, residues 34–66 (NAPQKVIEEFYNQTWLHRYGESISPATLTTLWS) are extracellular. A glycan (N-linked (GlcNAc...) asparagine) is linked at Asn45. Residues 67–87 (LSVAIFSVGGMIGSFSVGLFV) form a helical membrane-spanning segment. The Cytoplasmic segment spans residues 88-90 (NRF). Residues 91 to 112 (GRRNSMLMMNLLAFISAVLMGF) traverse the membrane as a helical segment. Residues 113 to 120 (SKLGKSFE) lie on the Extracellular side of the membrane. A helical transmembrane segment spans residues 121–144 (MLILGRFIIGVYCGLTTGFVPMYV). Residues 145–155 (GEVSPTALRGA) are Cytoplasmic-facing. The helical transmembrane segment at 156 to 176 (LGTLHQLGIVVGILIAQVFGL) threads the bilayer. Gln161 is a D-glucose binding site. Residues 177–185 (DSIMGNEEL) are Extracellular-facing. A helical transmembrane segment spans residues 186–206 (WPLLLSVIFIPALLQCVLLPF). At 207-271 (CPESPRFLLI…LFRSAAYRQP (65 aa)) the chain is on the cytoplasmic side. At Ser226 the chain carries Phosphoserine. The helical transmembrane segment at 272–293 (ILIAVVLQLSQQLSGINAVFYY) threads the bilayer. Residues 282-283 (QQ) and Asn288 each bind D-glucose. At 294-306 (STSIFEKAGVQQP) the chain is on the extracellular side. Residues 307–328 (VYATIGSGIVNTAFTVVSLFVV) traverse the membrane as a helical segment. Residue Asn317 coordinates D-glucose. Over 329 to 334 (ERAGRR) the chain is Cytoplasmic. The helical transmembrane segment at 335–355 (TLHLIGLAGMAGCAVLMTIAL) threads the bilayer. Residues 356-365 (ALLEQLPWMS) lie on the Extracellular side of the membrane. A helical membrane pass occupies residues 366-388 (YLSIVAIFGFVAFFEVGPGPIPW). Glu380 and Trp388 together coordinate D-glucose. Residues 389 to 401 (FIVAELFSQGPRP) lie on the Cytoplasmic side of the membrane. A helical membrane pass occupies residues 402 to 422 (AAIAVAGFSNWTSNFIVGMCF). At 423-429 (QYVEQLC) the chain is on the extracellular side. The helical transmembrane segment at 430–450 (GPYVFIIFTVLLVLFFIFTYF) threads the bilayer. Ser465 is subject to Phosphoserine. The segment at 468–492 (RQGGASQSDKTPEELFHPLGADSQV) is disordered. Thr478 bears the Phosphothreonine mark. A Phosphoserine modification is found at Ser490.

The protein belongs to the major facilitator superfamily. Sugar transporter (TC 2.A.1.1) family. Glucose transporter subfamily. As to quaternary structure, found in a complex with ADD2, DMTN and SLC2A1. Interacts (via C-terminus cytoplasmic region) with DMTN. Interacts with SNX27; the interaction is required when endocytosed to prevent degradation in lysosomes and promote recycling to the plasma membrane. Interacts with GIPC (via PDZ domain). Interacts with STOM. Interacts with SGTA (via Gln-rich region). Interacts with BSG. Interacts with SMIM43; the interaction may promote SLC2A1-mediated glucose transport to meet the energy needs of mesendoderm differentiation. In terms of processing, phosphorylation at Ser-226 by PKC promotes glucose uptake by increasing cell membrane localization.

It localises to the cell membrane. The protein resides in the photoreceptor inner segment. The catalysed reaction is D-glucose(out) = D-glucose(in). With respect to regulation, the uptake of glucose is inhibited by cytochalasin B. Glucose uptake is increased in response to phorbol ester 12-O-tetradecanoylphorbol-13-acetate (TPA) treatment: TPA-induced glucose uptake requires phosphorylation at Ser-226. Functionally, facilitative glucose transporter, which is responsible for constitutive or basal glucose uptake. Has a very broad substrate specificity; can transport a wide range of aldoses including both pentoses and hexoses. Most important energy carrier of the brain: present at the blood-brain barrier and assures the energy-independent, facilitative transport of glucose into the brain. In association with BSG and NXNL1, promotes retinal cone survival by increasing glucose uptake into photoreceptors. Required for mesendoderm differentiation. This Sus scrofa (Pig) protein is Solute carrier family 2, facilitated glucose transporter member 1.